The following is a 473-amino-acid chain: Photosystem II CP43 reaction center protein (473 aa).

The propeptide occupies 1-14 (MKTLYSLRRFYHVE). The residue at position 15 (Thr15) is an N-acetylthreonine. Thr15 carries the post-translational modification Phosphothreonine. 5 helical membrane passes run 69–93 (LFEV…PHLA), 134–155 (LLGP…KDRN), 178–200 (KALY…RKIT), 255–275 (KPFA…LSYS), and 291–312 (WFNN…ASQA). Glu367 serves as a coordination point for [CaMn4O5] cluster. A helical transmembrane segment spans residues 447–471 (RARAAAAGFEKGIDRDFEPVLSMTP).

This sequence belongs to the PsbB/PsbC family. PsbC subfamily. In terms of assembly, PSII is composed of 1 copy each of membrane proteins PsbA, PsbB, PsbC, PsbD, PsbE, PsbF, PsbH, PsbI, PsbJ, PsbK, PsbL, PsbM, PsbT, PsbX, PsbY, PsbZ, Psb30/Ycf12, at least 3 peripheral proteins of the oxygen-evolving complex and a large number of cofactors. It forms dimeric complexes. Requires Binds multiple chlorophylls and provides some of the ligands for the Ca-4Mn-5O cluster of the oxygen-evolving complex. It may also provide a ligand for a Cl- that is required for oxygen evolution. PSII binds additional chlorophylls, carotenoids and specific lipids. as cofactor.

Its subcellular location is the plastid. It localises to the chloroplast thylakoid membrane. In terms of biological role, one of the components of the core complex of photosystem II (PSII). It binds chlorophyll and helps catalyze the primary light-induced photochemical processes of PSII. PSII is a light-driven water:plastoquinone oxidoreductase, using light energy to abstract electrons from H(2)O, generating O(2) and a proton gradient subsequently used for ATP formation. This is Photosystem II CP43 reaction center protein from Manihot esculenta (Cassava).